Consider the following 448-residue polypeptide: MVPAVNPPTTSHHVAVIGAGAAGLVAARELRREGHSVVVFERGNQIGGVWAYTPNVEPDPLSIDPTRPVIHSSLYSSLRTIIPRECMGFTDFPFSTGPENKSRDPRRHPGHIEVLAYLKDFARKFKMDEMIRFETEVVRAEPAAENPKKWRVESRNSGDISDEIYDAVVVCNGHYTEPRHALIPGIDSCPGKQIHSHNYRIPDQFKDQLNSGSSVSGVDISRDIVNVTKEVHISSRSTKPETYEKLSGYDNLWLHSNIETVREDGSVVFKNGKTVYADTIMHCTGYKYYFPFLDTKGEVTVEDNRVGPLYKHVFPPALSPGLSFIGLPWQVILFPMFELQSKWVAAVLAGRFYSKLEASCIPKRYTHLMAELDSQFVYDNWLADQCDYPRIEKWREQMFYKVFKRIQSQSSTYKDDWDDDHLIAEAYEDFVKFPSNYPSSLIEREYTS.

Residue 18 to 23 participates in FAD binding; that stretch reads GAGAAG. 212–217 lines the NADP(+) pocket; sequence GSSVSG.

This sequence belongs to the FMO family. FAD is required as a cofactor.

Its function is as follows. Catalyzes the conversion of methylthioalkyl glucosinolates of any chain length into methylsulfinylalkyl glucosinolates. In Arabidopsis thaliana (Mouse-ear cress), this protein is Putative flavin-containing monooxygenase FMO GS-OX-like 10.